A 370-amino-acid chain; its full sequence is Platelet-derived growth factor D (370 aa).

An N-terminal signal peptide occupies residues 1–23 (MHRLILVSILVCANFCCYRDTFA). The region spanning 52–170 (RDENIRVTGT…PGFKIYYSFV (119 aa)) is the CUB domain. A disulfide bridge connects residues Cys109 and Cys131. Asn276 carries N-linked (GlcNAc...) asparagine glycosylation. Intrachain disulfides connect Cys302-Cys360 and Cys306-Cys362.

This sequence belongs to the PDGF/VEGF growth factor family. As to quaternary structure, homodimer; disulfide-linked. Interacts with PDGFRB homodimers, and with heterodimers formed by PDGFRA and PDGFRB. In terms of processing, activated by proteolytic cleavage. Proteolytic removal of the N-terminal CUB domain releasing the core domain is necessary for unmasking the receptor-binding epitopes of the core domain. Cleavage after Arg-247 or Arg-249 by urokinase plasminogen activator gives rise to the active form. In terms of tissue distribution, widely expressed. Expressed at high levels in the kidney, adrenal glands, eye and CNS. In the kidney the localization is confined to arterial and arteriolar vascular smooth muscle cells and is also detected at low levels in the glomeruli In the eye in the anterior segment it is localized to the iris and ciliary body. In the retina localizes intensely to the outer plexiform layer, which contains photoreceptor axons and the synaptic layer between photoreceptors and second order neurons. In the spinal cord, prominently expressed in the motorneurons.

It localises to the secreted. In terms of biological role, growth factor that plays an essential role in the regulation of embryonic development, cell proliferation, cell migration, survival and chemotaxis. Potent mitogen for cells of mesenchymal origin. Plays an important role in wound healing. Induces macrophage recruitment, increased interstitial pressure, and blood vessel maturation during angiogenesis. May play an important role in control of lens epithelial cell proliferation. Can initiate events that lead to a mesangial proliferative glomerulonephritis, including influx of monocytes and macrophages and production of extracellular matrix. The sequence is that of Platelet-derived growth factor D (Pdgfd) from Rattus norvegicus (Rat).